Here is a 241-residue protein sequence, read N- to C-terminus: tRNA pseudouridine synthase A (241 aa).

Catalysis depends on Asp-51, which acts as the Nucleophile. Tyr-110 lines the substrate pocket.

Belongs to the tRNA pseudouridine synthase TruA family. As to quaternary structure, homodimer.

It catalyses the reaction uridine(38/39/40) in tRNA = pseudouridine(38/39/40) in tRNA. Functionally, formation of pseudouridine at positions 38, 39 and 40 in the anticodon stem and loop of transfer RNAs. The protein is tRNA pseudouridine synthase A of Campylobacter jejuni subsp. jejuni serotype O:23/36 (strain 81-176).